The following is a 160-amino-acid chain: 6,7-dimethyl-8-ribityllumazine synthase (160 aa).

5-amino-6-(D-ribitylamino)uracil-binding positions include W28, 59-61 (ALE), and 81-83 (CVI). Position 86-87 (86-87 (ET)) interacts with (2S)-2-hydroxy-3-oxobutyl phosphate. H89 acts as the Proton donor in catalysis. N114 lines the 5-amino-6-(D-ribitylamino)uracil pocket. Position 128 (R128) interacts with (2S)-2-hydroxy-3-oxobutyl phosphate.

It belongs to the DMRL synthase family.

The enzyme catalyses (2S)-2-hydroxy-3-oxobutyl phosphate + 5-amino-6-(D-ribitylamino)uracil = 6,7-dimethyl-8-(1-D-ribityl)lumazine + phosphate + 2 H2O + H(+). Its pathway is cofactor biosynthesis; riboflavin biosynthesis; riboflavin from 2-hydroxy-3-oxobutyl phosphate and 5-amino-6-(D-ribitylamino)uracil: step 1/2. In terms of biological role, catalyzes the formation of 6,7-dimethyl-8-ribityllumazine by condensation of 5-amino-6-(D-ribitylamino)uracil with 3,4-dihydroxy-2-butanone 4-phosphate. This is the penultimate step in the biosynthesis of riboflavin. This Corynebacterium jeikeium (strain K411) protein is 6,7-dimethyl-8-ribityllumazine synthase.